The chain runs to 602 residues: MKHAKQIAEHATIQSFLNCYLRETGSGEWITEDKRIEDIFYHLFQRDTCSTYLCCRLSAQNITLYGEVIYKSPTDRHLFGEQFYYQMGDSNSVMKADYVTVITFLIKEMSINYGEGTNPAELMLRVIRSCQNIEEFTKERKEDTSALYGFHTSFIEAEQSLLFGHLTHPTPKSRQGILEWKSAMYSPELKGECQLHYFRAHKSIVNEKSLLLDSTTVILKEELRNDEMVSKEFISKYCNEDEYSLLPIHPLQAEWLLHQPYVQDWIEQGVLEYIGPTGKCYMATSSLRTLYHPDAKYMLKFSFPVKVTNSMRINKLKELESGLEGKAMLNTAIGEVLEKFPGFDFICDPAFITLNYGTQESGFEVIIRENPFYSEHADDATLIAGLVQDAIPGERTRLSNIIHRLADLESRSCEEVSLEWFRRYMNISLKPMVWMYLQYGVALEAHQQNSVVQLKDGYPVKYYFRDNQGFYFCNSMKEMLNNELAGIGERTGNLYDDYIVDERFRYYLIFNHMFGLINGFGTAGLIREEILLTELRTVLESFLPYNREPSTFLRELLEEDKLACKANLLTRFFDVDELSNPLEQAIYVQVQNPLVREVAVRS.

Residues Ser-286–Arg-288, Lys-300, and Arg-312 each bind ATP.

This sequence belongs to the IucA/IucC family.

The catalysed reaction is spermidine + citrate + ATP = N(8)-citryl-spermidine + AMP + diphosphate + H(+). It functions in the pathway siderophore biosynthesis; petrobactin biosynthesis. In terms of biological role, involved in the biosynthesis of petrobactin, a catecholate siderophore that functions in both iron acquisition and virulence. Catalyzes the ATP-dependent condensation of citric acid and spermidine to form N(8)-citryl-spermidine. It can also catalyze the condensation of several di- and triamine analogs of spermidine with citric acid and the condensation of the citric acid analog tricarballylic acid with spermidine. Required for growth in iron-depleted medium and for full virulence in a mouse model of infection. This is Spermidine-citrate ligase from Bacillus anthracis.